The chain runs to 433 residues: Alpha-(1,3)-fucosyltransferase 4 (433 aa).

Residues 1-20 form a disordered region; sequence MAPAGRKLQHESRCRPSRPV. Residues 1–54 are Cytoplasmic-facing; the sequence is MAPAGRKLQHESRCRPSRPVDAWRAAATTRGRCMGTPGARRTARRGGWGLPRTS. Residues 55–74 form a helical; Signal-anchor for type II membrane protein membrane-spanning segment; sequence SGLAAAGLLCTALTACLCWG. Residues 75-433 are Lumenal-facing; that stretch reads QLPPLPWASP…IHNLADWFQR (359 aa). Residues asparagine 117 and asparagine 218 are each glycosylated (N-linked (GlcNAc...) asparagine).

This sequence belongs to the glycosyltransferase 10 family. As to expression, in adult, highest expression in spleen, testis, brain, lung, kidney and skeletal muscle and to a lesser extent in liver and heart.

It localises to the golgi apparatus. Its subcellular location is the golgi stack membrane. It carries out the reaction a beta-D-galactosyl-(1-&gt;4)-N-acetyl-beta-D-glucosaminyl derivative + GDP-beta-L-fucose = a beta-D-galactosyl-(1-&gt;4)-[alpha-L-fucosyl-(1-&gt;3)]-N-acetyl-beta-D-glucosaminyl derivative + GDP + H(+). The catalysed reaction is an N-acetyl-alpha-neuraminyl-(2-&gt;3)-beta-D-galactosyl-(1-&gt;4)-N-acetyl-beta-D-glucosaminyl derivative + GDP-beta-L-fucose = an alpha-Neu5Ac-(2-&gt;3)-beta-D-Gal-(1-&gt;4)-[alpha-L-Fuc-(1-&gt;3)]-beta-D-GlcNAc derivative + GDP + H(+). It catalyses the reaction an alpha-Neu5Ac-(2-&gt;3)-beta-D-Gal-(1-&gt;4)-beta-D-GlcNAc-(1-&gt;3)-beta-D-Gal-(1-&gt;4)-beta-D-GlcNAc derivative + GDP-beta-L-fucose = an alpha-Neu5Ac-(2-&gt;3)-beta-D-Gal-(1-&gt;4)-beta-D-GlcNAc-(1-&gt;3)-beta-D-Gal-(1-&gt;4)-[alpha-L-Fuc-(1-&gt;3)]-beta-D-GlcNAc derivative + GDP + H(+). The enzyme catalyses an alpha-Neu5Ac-(2-&gt;3)-beta-D-Gal-(1-&gt;4)-beta-D-GlcNAc6S derivative + GDP-beta-L-fucose = an alpha-Neu5Ac-(2-&gt;3)-beta-D-Gal-(1-&gt;4)-[alpha-L-Fuc-(1-&gt;3)]-beta-D-GlcNAc6S derivative + GDP + H(+). It functions in the pathway protein modification; protein glycosylation. Functionally, catalyzes alpha(1-&gt;3) linkage of fucosyl moiety transferred from GDP-beta-L-fucose to N-acetyl glucosamine (GlcNAc) within type 2 lactosamine (LacNAc, Gal-beta(1-&gt;4)GlcNAc) glycan attached to N- or O-linked glycoproteins. Robustly fucosylates nonsialylated distal LacNAc unit of the polylactosamine chain to form Lewis X antigen (CD15), a glycan determinant known to mediate important cellular functions in development and immunity. Fucosylates with lower efficiency sialylated LacNAc acceptors to form sialyl Lewis X and 6-sulfo sialyl Lewis X determinants that serve as recognition epitopes for C-type lectins. Together with FUT7 contributes to SELE, SELL and SELP selectin ligand biosynthesis and selectin-dependent lymphocyte homing, leukocyte migration and blood leukocyte homeostasis. In a cell type specific manner, may also fucosylate the internal LacNAc unit of the polylactosamine chain to form VIM-2 antigen that serves as recognition epitope for SELE. The sequence is that of Alpha-(1,3)-fucosyltransferase 4 (Fut4) from Rattus norvegicus (Rat).